Reading from the N-terminus, the 448-residue chain is Phosphoglucosamine mutase (448 aa).

Catalysis depends on S99, which acts as the Phosphoserine intermediate. The Mg(2+) site is built by S99, D239, D241, and D243. S99 carries the phosphoserine modification.

This sequence belongs to the phosphohexose mutase family. The cofactor is Mg(2+). In terms of processing, activated by phosphorylation.

The catalysed reaction is alpha-D-glucosamine 1-phosphate = D-glucosamine 6-phosphate. In terms of biological role, catalyzes the conversion of glucosamine-6-phosphate to glucosamine-1-phosphate. The protein is Phosphoglucosamine mutase of Lachnoclostridium phytofermentans (strain ATCC 700394 / DSM 18823 / ISDg) (Clostridium phytofermentans).